We begin with the raw amino-acid sequence, 376 residues long: Putative glutamate--cysteine ligase 2-1 (376 aa).

It belongs to the glutamate--cysteine ligase type 2 family. YbdK subfamily.

The enzyme catalyses L-cysteine + L-glutamate + ATP = gamma-L-glutamyl-L-cysteine + ADP + phosphate + H(+). Functionally, ATP-dependent carboxylate-amine ligase which exhibits weak glutamate--cysteine ligase activity. This chain is Putative glutamate--cysteine ligase 2-1, found in Rubrobacter xylanophilus (strain DSM 9941 / JCM 11954 / NBRC 16129 / PRD-1).